A 295-amino-acid chain; its full sequence is Elongation factor Ts (295 aa).

The interval 79–82 (TDFV) is involved in Mg(2+) ion dislocation from EF-Tu.

This sequence belongs to the EF-Ts family.

Its subcellular location is the cytoplasm. Associates with the EF-Tu.GDP complex and induces the exchange of GDP to GTP. It remains bound to the aminoacyl-tRNA.EF-Tu.GTP complex up to the GTP hydrolysis stage on the ribosome. This is Elongation factor Ts from Bacillus cereus (strain G9842).